Consider the following 97-residue polypeptide: Large ribosomal subunit protein uL23 (97 aa).

This sequence belongs to the universal ribosomal protein uL23 family. As to quaternary structure, part of the 50S ribosomal subunit. Contacts protein L29, and trigger factor when it is bound to the ribosome.

One of the early assembly proteins it binds 23S rRNA. One of the proteins that surrounds the polypeptide exit tunnel on the outside of the ribosome. Forms the main docking site for trigger factor binding to the ribosome. The polypeptide is Large ribosomal subunit protein uL23 (Clostridium botulinum (strain ATCC 19397 / Type A)).